A 169-amino-acid chain; its full sequence is NADH-quinone oxidoreductase subunit B (169 aa).

[4Fe-4S] cluster contacts are provided by C42, C43, C107, and C136.

This sequence belongs to the complex I 20 kDa subunit family. As to quaternary structure, NDH-1 is composed of 14 different subunits. Subunits NuoB, C, D, E, F, and G constitute the peripheral sector of the complex. The cofactor is [4Fe-4S] cluster.

Its subcellular location is the cell inner membrane. It catalyses the reaction a quinone + NADH + 5 H(+)(in) = a quinol + NAD(+) + 4 H(+)(out). Functionally, NDH-1 shuttles electrons from NADH, via FMN and iron-sulfur (Fe-S) centers, to quinones in the respiratory chain. Couples the redox reaction to proton translocation (for every two electrons transferred, four hydrogen ions are translocated across the cytoplasmic membrane), and thus conserves the redox energy in a proton gradient. The chain is NADH-quinone oxidoreductase subunit B from Campylobacter hominis (strain ATCC BAA-381 / DSM 21671 / CCUG 45161 / LMG 19568 / NCTC 13146 / CH001A).